A 20-amino-acid polypeptide reads, in one-letter code: Unknown protein NF045 from 2D-PAGE (20 aa).

In Naegleria fowleri (Brain eating amoeba), this protein is Unknown protein NF045 from 2D-PAGE.